A 209-amino-acid chain; its full sequence is MSPQRPQRAFFCSEGAKKKKKPKYRFGFPMALYFFFEKLNFSYWTSTTVSPNHYVCVLPAAASQALASVLGGELFLGKSQLVEATAFDLTGQEVAAGDFLVFLKNNGIVLSYSFYFFLLKKRITFFLHGGEKVCSVEAFYSNANWLEREISEMFGVSYLLKKDSRNLLLDYGSSFNPFLKKFPSTGHTEVVFNSFLKTTAYVQNASVEL.

This sequence belongs to the complex I 30 kDa subunit family. In terms of assembly, complex I is composed of about 30 different subunits.

It localises to the mitochondrion inner membrane. The catalysed reaction is a ubiquinone + NADH + 5 H(+)(in) = a ubiquinol + NAD(+) + 4 H(+)(out). Core subunit of the mitochondrial membrane respiratory chain NADH dehydrogenase (Complex I) that is believed to belong to the minimal assembly required for catalysis. Complex I functions in the transfer of electrons from NADH to the respiratory chain. The immediate electron acceptor for the enzyme is believed to be ubiquinone. This Paramecium primaurelia protein is NADH-ubiquinone oxidoreductase subunit 9 (NAD9).